Consider the following 508-residue polypeptide: MSRFVQDLSKAMSQDGASQFQEVILQELELSVKKELEKILTTATSHEYEHTKKDLDGFRKLYHRFLQEKGPSVDWGKIQRPPEDSIQPYEKIKARGLPDNISSVLNKLVVVKLNGGLGTSMGCKGPKSLIGVRNENTFLDLTVQQIEHLNKSYNTDVPLVLMNSFNTDEDTKKILQKYNHCRVKIYTFNQSRYPRINKESLLPVAKDVSSSGESTEAWYPPGHGDIYASFYNSGLLDTFLEEGKEYIFVSNIDNLGATVDLYILNHLMNPPNGKRCEFVMEVTNKTRADVKGGTLTQYEGKLRLVEIAQVPKAHVDEFKSVSKFKIFNTNNLWISLAAVKRLQEQNAIDMEIIVNPKTLDGGLNVIQLETAVGAAIKSFENSLGINVPRSRFLPVKTTSDLLLVMSNLYSLNAGSLTMSEKREFPTVPLVKLGSSFTKVQDYLRRFESIPDMLELDHLTVSGDVTFGKNVSLKGTVIIIANHGDRIDIPPGAVLENKIVSGNLRILDH.

Serine 13 bears the Phosphoserine mark. Residues 113–116, lysine 127, glutamine 190, and glycine 222 contribute to the UTP site; that span reads LNGG. Residue 115-116 participates in substrate binding; the sequence is GG. Residue lysine 127 coordinates Mg(2+). Residues histidine 223 and 251–253 each bind substrate; that span reads NID. 2 residues coordinate UTP: aspartate 253 and lysine 396. Residue aspartate 253 participates in Mg(2+) binding. The active site involves lysine 396. At threonine 426 the chain carries Phosphothreonine. Serine 434 is modified (phosphoserine). Lysine 438 carries the post-translational modification N6-acetyllysine. A phosphoserine mark is found at serine 448 and serine 461. An oligomerization region spans residues 457–508; it reads HLTVSGDVTFGKNVSLKGTVIIIANHGDRIDIPPGAVLENKIVSGNLRILDH. Positions 502 to 503 are critical for end-to-end subunit interaction; that stretch reads NL.

It belongs to the UDPGP type 1 family. In terms of assembly, homooctamer.

The protein resides in the cytoplasm. The catalysed reaction is alpha-D-glucose 1-phosphate + UTP + H(+) = UDP-alpha-D-glucose + diphosphate. The protein operates within glycan biosynthesis; glycogen biosynthesis. In terms of biological role, UTP--glucose-1-phosphate uridylyltransferase catalyzing the conversion of glucose-1-phosphate into UDP-glucose, a crucial precursor for the production of glycogen. The protein is UTP--glucose-1-phosphate uridylyltransferase (UGP2) of Cricetulus griseus (Chinese hamster).